The sequence spans 307 residues: Serine/threonine-protein phosphatase PP2A-5 catalytic subunit (307 aa).

Residues aspartate 55, histidine 57, aspartate 83, and asparagine 115 each contribute to the Mn(2+) site. The Proton donor role is filled by histidine 116. Positions 165 and 239 each coordinate Mn(2+). At leucine 307 the chain carries Leucine methyl ester.

It belongs to the PPP phosphatase family. PP-2A subfamily. PP2A consists of a common heterodimeric core enzyme, composed of a 36 kDa catalytic subunit (subunit C) and a 65 kDa constant regulatory subunit (subunit A), that associates with a variety of regulatory subunits such as subunits B (the R2/B/PR55/B55, R3/B''/PR72/PR130/PR59 and R5/B'/B56 families). Also interacts with CHIP and TAF12B. Interacts with B'THETA. Interacts with CLC-A, CLC-B, CLC-C and CLC-G. It depends on Mn(2+) as a cofactor. Reversibly methyl esterified on Leu-307 by leucine carboxyl methyltransferase 1 (LCMT1) and pectin methylesterase 1 (PME1). Carboxyl methylation influences the affinity of the catalytic subunit for the different regulatory subunits, thereby modulating the PP2A holoenzyme's substrate specificity, enzyme activity and cellular localization. In terms of processing, phosphorylation of either threonine (by autophosphorylation-activated protein kinase) or tyrosine results in inactivation of the phosphatase. Auto-dephosphorylation has been suggested as a mechanism for reactivation. Post-translationally, ubiquitinated. CHIP-mediated ubiquitination enhances phosphatase activity after an abiotic stress such as low temperature or darkness.

The protein resides in the cytoplasm. It localises to the cytosol. The protein localises to the peroxisome. It catalyses the reaction O-phospho-L-seryl-[protein] + H2O = L-seryl-[protein] + phosphate. The catalysed reaction is O-phospho-L-threonyl-[protein] + H2O = L-threonyl-[protein] + phosphate. Functionally, associates with the serine/threonine-protein phosphatase PP2A regulatory subunits A and B' to positively regulates beta-oxidation of fatty acids and protoauxins in peroxisomes by dephosphorylating peroxisomal beta-oxidation-related proteins. Involved in the positive regulation of salt stress responses. May function by increasing chloride channel activities on vacuolar membranes. This is Serine/threonine-protein phosphatase PP2A-5 catalytic subunit from Arabidopsis thaliana (Mouse-ear cress).